A 500-amino-acid polypeptide reads, in one-letter code: MATILFLSLLFLSCILLAAFTHKKRQQHQRKPPSPPGFPIIGNLHQLGELPHQSLWRLSKKYGHVMLLKFGSIPTVVVSSSETAKQVLKIHDLHCCSRPSLAGPRALSYNYLDIAFSPFDDYWKELRRICVQELFSVKRVQSFQPIKEDEVKKLIDSVSESASQGTPVNLSEKFTSLTVRVTCKATFGVNFQGTVLNSDRFEKLIHDTYLFLGSFSASDYFPNGGWIIDWLTGLHGQRERSVRALDAFYEQMFDLHKQGNKEGVEDFVDLLLRLEKEETVIGYGKLTRNHIKAILMNVLIGGIGTSAITMTWAMTELMRNPRVMKKVQSEIRNQIGKKSMITLDDIDQLHYLKMVINETWRLHPPSPFLIPRQVMSEFELNDYVIPVKTRLYVNVWAIGRDPDTWKDPEEFLPERFVNSSIDAKGQHFELLPFGSGRRMCPAMYMGTTMVEFGLANMLYHFDWKIPVGMVAEDIDLEESPGLNASKKNELVLVPLKYLDH.

Residues 1–21 (MATILFLSLLFLSCILLAAFT) traverse the membrane as a helical segment. C440 lines the heme pocket.

The protein belongs to the cytochrome P450 family. Heme serves as cofactor.

It localises to the membrane. This chain is Cytochrome P450 71B36 (CYP71B36), found in Arabidopsis thaliana (Mouse-ear cress).